We begin with the raw amino-acid sequence, 273 residues long: Probable cysteine-rich repeat secretory protein 6 (273 aa).

A signal peptide spans 1–21; that stretch reads MTRIIDVSLFCFFLFSLGAMS. Gnk2-homologous domains lie at 22 to 122 and 128 to 241; these read QPSQ…DNSF and DSPA…ISAL.

This sequence belongs to the cysteine-rich repeat secretory protein family.

It is found in the secreted. This is Probable cysteine-rich repeat secretory protein 6 (CRRSP6) from Arabidopsis thaliana (Mouse-ear cress).